The sequence spans 443 residues: Na(+)-translocating NADH-quinone reductase subunit A (443 aa).

Belongs to the NqrA family. Composed of six subunits; NqrA, NqrB, NqrC, NqrD, NqrE and NqrF.

It catalyses the reaction a ubiquinone + n Na(+)(in) + NADH + H(+) = a ubiquinol + n Na(+)(out) + NAD(+). NQR complex catalyzes the reduction of ubiquinone-1 to ubiquinol by two successive reactions, coupled with the transport of Na(+) ions from the cytoplasm to the periplasm. NqrA to NqrE are probably involved in the second step, the conversion of ubisemiquinone to ubiquinol. This Actinobacillus succinogenes (strain ATCC 55618 / DSM 22257 / CCUG 43843 / 130Z) protein is Na(+)-translocating NADH-quinone reductase subunit A.